Consider the following 525-residue polypeptide: MSDIHEHKILILDFGSQYTQLIARRIREIGVYCELWAWDVTEAQIREFAPNGIILAGGPESVTAENSPRAPEYVFNAGIPVLGICYGMQTMSEQLGGKVIQGVGEGEFGYAQIEMLTKSALFKDIEDAVNSEGKPLLDVWMSHGDKVSAIPEGFVAVAKTDTCPFAAMANEEKRFYGVQFHPEVTHTRQGMRMLSHFALDICGCAANWKPSSIIEDAIERLKKQIGDDEVILGLSGGVDSSVVAMLLHRAIGKKLTCVFVDNGLLRLNEAAQVMEMFGDHFGLNIIHVDAENRFLDAMKGVADPEAKRKIIGRVFVEIFDEESKKCANAKWLAQGTIYPDVIESAGSATGKAHVIKSHHNVGGLPDDMALGLVEPLRELFKDEVRKIGLELGLPYNMLYRHPFPGPGLGVRVLGEVKKEYCDLLRRADAIFIEELHKADLYNKVSQAFTVFLPVRSVGVMGDGRKYDWVVSLRAVETIDFMTAHWAHLPYDFLGRVSNRIINEVDGISRVVYDISGKPPATIEWE.

One can recognise a Glutamine amidotransferase type-1 domain in the interval 8 to 207 (KILILDFGSQ…ALDICGCAAN (200 aa)). Cys-85 acts as the Nucleophile in catalysis. Catalysis depends on residues His-181 and Glu-183. The region spanning 208-400 (WKPSSIIEDA…LGLPYNMLYR (193 aa)) is the GMPS ATP-PPase domain. Position 235–241 (235–241 (SGGVDSS)) interacts with ATP.

Homodimer.

It catalyses the reaction XMP + L-glutamine + ATP + H2O = GMP + L-glutamate + AMP + diphosphate + 2 H(+). Its pathway is purine metabolism; GMP biosynthesis; GMP from XMP (L-Gln route): step 1/1. In terms of biological role, catalyzes the synthesis of GMP from XMP. This Shewanella putrefaciens (strain CN-32 / ATCC BAA-453) protein is GMP synthase [glutamine-hydrolyzing].